The primary structure comprises 710 residues: Choline transporter-like protein 5 (710 aa).

The tract at residues Met-1–Phe-21 is disordered. Topologically, residues Met-1–Asp-32 are cytoplasmic. The chain crosses the membrane as a helical span at residues Val-33 to Ala-53. At Trp-54–Trp-236 the chain is on the extracellular side. Residues Asn-82 and Asn-184 are each glycosylated (N-linked (GlcNAc...) asparagine). The chain crosses the membrane as a helical span at residues Lys-237–Leu-257. Residues Arg-258–Thr-260 lie on the Cytoplasmic side of the membrane. The helical transmembrane segment at Ala-261–Trp-281 threads the bilayer. Over Tyr-282–Trp-319 the chain is Extracellular. Residues Phe-320–Leu-340 traverse the membrane as a helical segment. The Cytoplasmic portion of the chain corresponds to Arg-341–Gln-345. A helical transmembrane segment spans residues Val-346–Ile-366. Residues Tyr-367–Pro-368 lie on the Extracellular side of the membrane. Residues Val-369–Leu-389 traverse the membrane as a helical segment. Residues Ala-390–Asn-454 are Cytoplasmic-facing. A helical membrane pass occupies residues Leu-455 to Gly-475. The Extracellular segment spans residues Ala-476–Ser-509. The chain crosses the membrane as a helical span at residues Leu-510–Leu-530. Over Asp-531–Tyr-604 the chain is Cytoplasmic. A helical transmembrane segment spans residues Phe-605–Leu-625. Topologically, residues Phe-626–Tyr-643 are extracellular. The chain crosses the membrane as a helical span at residues Trp-644–Val-664. Residues Tyr-665–Gln-710 lie on the Cytoplasmic side of the membrane.

Belongs to the CTL (choline transporter-like) family.

The protein resides in the cell membrane. The catalysed reaction is choline(out) + n H(+)(in) = choline(in) + n H(+)(out). Its function is as follows. Choline/H+ antiporter. This is Choline transporter-like protein 5 (Slc44a5) from Mus musculus (Mouse).